Consider the following 60-residue polypeptide: Large ribosomal subunit protein bL32 (60 aa).

A compositionally biased stretch (basic residues) spans 1-23 (MAKHPVPKKKTSKARRDARRSHH). The disordered stretch occupies residues 1 to 28 (MAKHPVPKKKTSKARRDARRSHHALTPP).

It belongs to the bacterial ribosomal protein bL32 family. As to quaternary structure, part of the 50S ribosomal subunit.

Its function is as follows. Found on the solvent side of the large subunit. The polypeptide is Large ribosomal subunit protein bL32 (rpmF) (Thermus thermophilus (strain ATCC BAA-163 / DSM 7039 / HB27)).